Here is a 348-residue protein sequence, read N- to C-terminus: 4-hydroxy-3-methylbut-2-en-1-yl diphosphate synthase (flavodoxin) (348 aa).

Cysteine 263, cysteine 266, cysteine 298, and glutamate 305 together coordinate [4Fe-4S] cluster.

The protein belongs to the IspG family. [4Fe-4S] cluster serves as cofactor.

It catalyses the reaction (2E)-4-hydroxy-3-methylbut-2-enyl diphosphate + oxidized [flavodoxin] + H2O + 2 H(+) = 2-C-methyl-D-erythritol 2,4-cyclic diphosphate + reduced [flavodoxin]. It participates in isoprenoid biosynthesis; isopentenyl diphosphate biosynthesis via DXP pathway; isopentenyl diphosphate from 1-deoxy-D-xylulose 5-phosphate: step 5/6. Its function is as follows. Converts 2C-methyl-D-erythritol 2,4-cyclodiphosphate (ME-2,4cPP) into 1-hydroxy-2-methyl-2-(E)-butenyl 4-diphosphate. The chain is 4-hydroxy-3-methylbut-2-en-1-yl diphosphate synthase (flavodoxin) from Dehalococcoides mccartyi (strain ATCC BAA-2100 / JCM 16839 / KCTC 5957 / BAV1).